The following is a 355-amino-acid chain: Protein RecA (355 aa).

67–74 (GPESSGKT) contacts ATP.

It belongs to the RecA family.

The protein resides in the cytoplasm. In terms of biological role, can catalyze the hydrolysis of ATP in the presence of single-stranded DNA, the ATP-dependent uptake of single-stranded DNA by duplex DNA, and the ATP-dependent hybridization of homologous single-stranded DNAs. It interacts with LexA causing its activation and leading to its autocatalytic cleavage. This Shewanella piezotolerans (strain WP3 / JCM 13877) protein is Protein RecA.